The primary structure comprises 617 residues: UvrABC system protein C (617 aa).

In terms of domain architecture, GIY-YIG spans 22–100 (KLPGVYRFFD…IKALSPKYNI (79 aa)). The region spanning 209–244 (DELTRTLQHKMQTAAANLQFEEAARYRDQIQALGIM) is the UVR domain.

Belongs to the UvrC family. Interacts with UvrB in an incision complex.

It is found in the cytoplasm. Functionally, the UvrABC repair system catalyzes the recognition and processing of DNA lesions. UvrC both incises the 5' and 3' sides of the lesion. The N-terminal half is responsible for the 3' incision and the C-terminal half is responsible for the 5' incision. The protein is UvrABC system protein C of Neisseria meningitidis serogroup A / serotype 4A (strain DSM 15465 / Z2491).